A 227-amino-acid polypeptide reads, in one-letter code: Cytochrome c oxidase subunit 2 (227 aa).

Residues 1-14 (MACPVQLGFQDAAS) lie on the Mitochondrial intermembrane side of the membrane. The chain crosses the membrane as a helical span at residues 15 to 45 (PIMEELTYFHDHTLMIVFLISSLVLYIISLM). Residues 46-59 (LTTELTHTSTMDAQ) lie on the Mitochondrial matrix side of the membrane. The chain crosses the membrane as a helical span at residues 60–87 (EVETVWTILPAVILILIALPSLRILYMM). Topologically, residues 88–227 (DEITTPSLTL…HFEEWLLAML (140 aa)) are mitochondrial intermembrane. Positions 161, 196, 198, 200, 204, and 207 each coordinate Cu cation. Residue Glu198 coordinates Mg(2+).

It belongs to the cytochrome c oxidase subunit 2 family. Component of the cytochrome c oxidase (complex IV, CIV), a multisubunit enzyme composed of 14 subunits. The complex is composed of a catalytic core of 3 subunits MT-CO1, MT-CO2 and MT-CO3, encoded in the mitochondrial DNA, and 11 supernumerary subunits COX4I, COX5A, COX5B, COX6A, COX6B, COX6C, COX7A, COX7B, COX7C, COX8 and NDUFA4, which are encoded in the nuclear genome. The complex exists as a monomer or a dimer and forms supercomplexes (SCs) in the inner mitochondrial membrane with NADH-ubiquinone oxidoreductase (complex I, CI) and ubiquinol-cytochrome c oxidoreductase (cytochrome b-c1 complex, complex III, CIII), resulting in different assemblies (supercomplex SCI(1)III(2)IV(1) and megacomplex MCI(2)III(2)IV(2)). Found in a complex with TMEM177, COA6, COX18, COX20, SCO1 and SCO2. Interacts with TMEM177 in a COX20-dependent manner. Interacts with COX20. Interacts with COX16. Cu cation is required as a cofactor.

The protein resides in the mitochondrion inner membrane. The enzyme catalyses 4 Fe(II)-[cytochrome c] + O2 + 8 H(+)(in) = 4 Fe(III)-[cytochrome c] + 2 H2O + 4 H(+)(out). Its function is as follows. Component of the cytochrome c oxidase, the last enzyme in the mitochondrial electron transport chain which drives oxidative phosphorylation. The respiratory chain contains 3 multisubunit complexes succinate dehydrogenase (complex II, CII), ubiquinol-cytochrome c oxidoreductase (cytochrome b-c1 complex, complex III, CIII) and cytochrome c oxidase (complex IV, CIV), that cooperate to transfer electrons derived from NADH and succinate to molecular oxygen, creating an electrochemical gradient over the inner membrane that drives transmembrane transport and the ATP synthase. Cytochrome c oxidase is the component of the respiratory chain that catalyzes the reduction of oxygen to water. Electrons originating from reduced cytochrome c in the intermembrane space (IMS) are transferred via the dinuclear copper A center (CU(A)) of subunit 2 and heme A of subunit 1 to the active site in subunit 1, a binuclear center (BNC) formed by heme A3 and copper B (CU(B)). The BNC reduces molecular oxygen to 2 water molecules using 4 electrons from cytochrome c in the IMS and 4 protons from the mitochondrial matrix. The polypeptide is Cytochrome c oxidase subunit 2 (MT-CO2) (Cheirogaleus medius (Fat-tailed dwarf lemur)).